Reading from the N-terminus, the 398-residue chain is Phosphoglycerate kinase (398 aa).

Substrate contacts are provided by residues 21–23, arginine 36, 59–62, arginine 119, and arginine 157; these read DFN and HLGR. ATP is bound by residues lysine 208, glycine 296, glutamate 327, and 354–357; that span reads GGDS.

The protein belongs to the phosphoglycerate kinase family. Monomer.

The protein resides in the cytoplasm. It catalyses the reaction (2R)-3-phosphoglycerate + ATP = (2R)-3-phospho-glyceroyl phosphate + ADP. It functions in the pathway carbohydrate degradation; glycolysis; pyruvate from D-glyceraldehyde 3-phosphate: step 2/5. The sequence is that of Phosphoglycerate kinase from Streptococcus mutans serotype c (strain ATCC 700610 / UA159).